The following is a 1062-amino-acid chain: Carbamoyl phosphate synthase large chain (1062 aa).

The tract at residues 1–401 (MPKRKDIHKI…AMQKAVRSLE (401 aa)) is carboxyphosphate synthetic domain. 12 residues coordinate ATP: Arg-129, Arg-169, Gly-175, Gly-176, Lys-208, Ile-210, Glu-215, Gly-241, Ile-242, His-243, Gln-284, and Glu-298. The region spanning 133 to 327 (KNLCKELGEP…IAKMAAKIAV (195 aa)) is the ATP-grasp 1 domain. Mg(2+) is bound by residues Gln-284, Glu-298, and Asn-300. Mn(2+) is bound by residues Gln-284, Glu-298, and Asn-300. The oligomerization domain stretch occupies residues 402 to 546 (IDEKDLYSEE…YSTYDAENES (145 aa)). The interval 547-929 (HRSGKKSVIV…ALYKAFAGAK (383 aa)) is carbamoyl phosphate synthetic domain. The 191-residue stretch at 671–861 (DDIIKELKLN…MAQVATRVIM (191 aa)) folds into the ATP-grasp 2 domain. Residues Arg-707, Asp-746, Leu-748, Glu-752, Gly-777, Val-778, His-779, Ser-780, Gln-820, and Glu-832 each coordinate ATP. The Mg(2+) site is built by Gln-820, Glu-832, and Asn-834. Positions 820, 832, and 834 each coordinate Mn(2+). Residues 930 to 1062 (MQLPENGNVL…NRSFATDALQ (133 aa)) enclose the MGS-like domain. The tract at residues 930–1062 (MQLPENGNVL…NRSFATDALQ (133 aa)) is allosteric domain.

Belongs to the CarB family. In terms of assembly, composed of two chains; the small (or glutamine) chain promotes the hydrolysis of glutamine to ammonia, which is used by the large (or ammonia) chain to synthesize carbamoyl phosphate. Tetramer of heterodimers (alpha,beta)4. It depends on Mg(2+) as a cofactor. The cofactor is Mn(2+).

The catalysed reaction is hydrogencarbonate + L-glutamine + 2 ATP + H2O = carbamoyl phosphate + L-glutamate + 2 ADP + phosphate + 2 H(+). The enzyme catalyses hydrogencarbonate + NH4(+) + 2 ATP = carbamoyl phosphate + 2 ADP + phosphate + 2 H(+). Its pathway is amino-acid biosynthesis; L-arginine biosynthesis; carbamoyl phosphate from bicarbonate: step 1/1. The protein operates within pyrimidine metabolism; UMP biosynthesis via de novo pathway; (S)-dihydroorotate from bicarbonate: step 1/3. Its function is as follows. Large subunit of the glutamine-dependent carbamoyl phosphate synthetase (CPSase). CPSase catalyzes the formation of carbamoyl phosphate from the ammonia moiety of glutamine, carbonate, and phosphate donated by ATP, constituting the first step of 2 biosynthetic pathways, one leading to arginine and/or urea and the other to pyrimidine nucleotides. The large subunit (synthetase) binds the substrates ammonia (free or transferred from glutamine from the small subunit), hydrogencarbonate and ATP and carries out an ATP-coupled ligase reaction, activating hydrogencarbonate by forming carboxy phosphate which reacts with ammonia to form carbamoyl phosphate. The chain is Carbamoyl phosphate synthase large chain from Lactobacillus acidophilus (strain ATCC 700396 / NCK56 / N2 / NCFM).